A 114-amino-acid polypeptide reads, in one-letter code: UPF0757 protein YmgG (114 aa).

This sequence belongs to the UPF0757 family.

This is UPF0757 protein YmgG from Edwardsiella ictaluri (strain 93-146).